The following is a 447-amino-acid chain: N-succinylarginine dihydrolase (447 aa).

Residues 19-28 (AGLSFGNEAS), Asn-110, and 137-138 (HR) contribute to the substrate site. Residue Glu-174 is part of the active site. Arg-214 contributes to the substrate binding site. Residue His-250 is part of the active site. The substrate site is built by Asp-252 and Asn-365. Catalysis depends on Cys-371, which acts as the Nucleophile.

The protein belongs to the succinylarginine dihydrolase family. As to quaternary structure, homodimer.

The enzyme catalyses N(2)-succinyl-L-arginine + 2 H2O + 2 H(+) = N(2)-succinyl-L-ornithine + 2 NH4(+) + CO2. The protein operates within amino-acid degradation; L-arginine degradation via AST pathway; L-glutamate and succinate from L-arginine: step 2/5. In terms of biological role, catalyzes the hydrolysis of N(2)-succinylarginine into N(2)-succinylornithine, ammonia and CO(2). The chain is N-succinylarginine dihydrolase from Acinetobacter baumannii (strain ATCC 17978 / DSM 105126 / CIP 53.77 / LMG 1025 / NCDC KC755 / 5377).